Reading from the N-terminus, the 79-residue chain is Probable 26S proteasome complex subunit sem1 (79 aa).

Positions 1–21 are enriched in basic and acidic residues; it reads MSAPDKEKEKEKEETNNKSED. The disordered stretch occupies residues 1–30; it reads MSAPDKEKEKEKEETNNKSEDLGLLEEDDE. Residue S19 is modified to Phosphoserine.

The protein belongs to the DSS1/SEM1 family. Part of the 26S proteasome.

In terms of biological role, subunit of the 26S proteasome which plays a role in ubiquitin-dependent proteolysis. The sequence is that of Probable 26S proteasome complex subunit sem1 from Drosophila melanogaster (Fruit fly).